The following is a 683-amino-acid chain: Synaptic vesicle glycoprotein 2B (683 aa).

Residues 1–42 form a disordered region; sequence MDDYKYQDNYGGYAPSDGYYRGNESNPEEDAQSDVTEGHDEE. Residues 1–108 lie on the Cytoplasmic side of the membrane; that stretch reads MDDYKYQDNY…MDECGHGRFQ (108 aa). Phosphoserine is present on Ser-33. Residue Thr-36 is modified to Phosphothreonine. Residues 109–129 form a helical membrane-spanning segment; that stretch reads WILFFVLGLALMADGVEVFVV. The Extracellular segment spans residues 130-148; it reads SFALPSAEKDMCLSSSKKG. The helical transmembrane segment at 149 to 169 threads the bilayer; sequence MLGMIVYLGMMAGAFILGGLA. At 170-182 the chain is on the cytoplasmic side; the sequence is DKLGRKRVLSMSL. A helical membrane pass occupies residues 183–203; sequence AVNASFASLSSFVQGYGAFLF. The Extracellular portion of the chain corresponds to 204–205; the sequence is CR. Residues 206–226 traverse the membrane as a helical segment; that stretch reads LISGIGIGGALPIVFAYFSEF. Topologically, residues 227-237 are cytoplasmic; it reads LSREKRGEHLS. A helical membrane pass occupies residues 238–258; the sequence is WLGIFWMTGGLYASAMAWSII. At 259–277 the chain is on the extracellular side; that stretch reads PHYGWGFSMGTNYHFHSWR. Residues 278–298 form a helical membrane-spanning segment; it reads VFVIVCALPCTVSMVALKFMP. Topologically, residues 299 to 390 are cytoplasmic; it reads ESPRFLLEMG…CVMGPYRMNT (92 aa). Residues 391–411 form a helical membrane-spanning segment; that stretch reads LILAVVWFAMAFSYYGLTVWF. The Extracellular portion of the chain corresponds to 412–535; sequence PDMIRYFQDE…CHMDLEQDND (124 aa). Residue Tyr-423 is modified to Phosphotyrosine. N-linked (GlcNAc...) asparagine glycans are attached at residues Asn-441, Asn-491, and Asn-516. Residues 536–556 form a helical membrane-spanning segment; sequence FLIYLVSFLGSLSVLPGNIIS. Topologically, residues 557–565 are cytoplasmic; the sequence is ALLMDRIGR. Residues 566 to 586 form a helical membrane-spanning segment; it reads LKMIGGSMLISAVCCFFLFFG. Residues 587 to 592 lie on the Extracellular side of the membrane; that stretch reads NSESAM. A helical membrane pass occupies residues 593 to 613; the sequence is IGWQCLFCGTSIAAWNALDVI. Residues 614 to 626 are Cytoplasmic-facing; sequence TVELYPTNQRATA. Residues 627–649 form a helical membrane-spanning segment; sequence FGILNGLCKFGAILGNTIFASFV. Residues 650–653 are Extracellular-facing; the sequence is GITK. A helical membrane pass occupies residues 654–672; that stretch reads VVPILLAAASLVGGGLIAL. Residues 673–683 lie on the Cytoplasmic side of the membrane; it reads RLPETREQVLM.

The protein belongs to the major facilitator superfamily. Interacts with SYT1 in a calcium-independent manner. Forms a complex with SYT1, syntaxin-1 and SNAP25. As to quaternary structure, (Microbial infection) Interacts with C.botulinum neurotoxin type A2 (BoNT/A, botA). Interaction is improved by glycosylation of SV2. N-glycosylated. Post-translationally, the N-terminal cytoplasmic domain is phosphorylated by CK1.

It is found in the cytoplasmic vesicle. The protein localises to the secretory vesicle. The protein resides in the synaptic vesicle membrane. Its subcellular location is the acrosome. Functionally, probably plays a role in the control of regulated secretion in neural and endocrine cells. (Microbial infection) Receptor for the C.botulinum neurotoxin type A2 (BoNT/A, botA); glycosylation is not essential but enhances the interaction. Probably also serves as a receptor for the closely related C.botulinum neurotoxin type A1. This chain is Synaptic vesicle glycoprotein 2B (SV2B), found in Homo sapiens (Human).